Consider the following 813-residue polypeptide: Palmitoyltransferase AKR1 (813 aa).

Residues 1 to 83 (MAKKKSKSKS…PVTTSNETDP (83 aa)) are disordered. Over 1-387 (MAKKKSKSKS…KPWVSAKLGK (387 aa)) the chain is Cytoplasmic. Over residues 9–24 (KSSSPKPKVSSTAAKP) the composition is skewed to low complexity. Residues 28–46 (DNQQNIENVQDSPSALQQQ) show a composition bias toward polar residues. Positions 47–78 (SATAEESENTATTATPSEGTTATTESSPVTTS) are enriched in low complexity. ANK repeat units follow at residues 133 to 162 (PTLA…VLVN), 167 to 196 (DEIT…NPNQ), 201 to 231 (LKAS…DPNL), 235 to 264 (QTYN…STDS), 276 to 305 (SNRT…DVSK), and 309 to 338 (SLFI…DIYF). Residues 388–408 (IITFLTPYFLLPLSFNVLSMG) form a helical membrane-spanning segment. The Lumenal segment spans residues 409 to 412 (GDQG). The chain crosses the membrane as a helical span at residues 413-433 (GFIIPKLILAIGILGGGIYLL). Residues 434-452 (NKLIISQYIFDDKKLAKSP) are Cytoplasmic-facing. A helical transmembrane segment spans residues 453 to 473 (ILAGVFSATAFWSVLVWLYNI). Topologically, residues 474 to 485 (LPTTFIHNFFAN) are lumenal. A helical membrane pass occupies residues 486-506 (VIMAILIAIFTWSFFKAMFIN). The Cytoplasmic segment spans residues 507–579 (PGFVPTPADN…YNDIGVRNHK (73 aa)). The DHHC domain maps to 536 to 586 (HFCVNSFVRKPLRSRYSKHNKRLIARFDHSCPWVYNDIGVRNHKIFITFVY). Cys566 (S-palmitoyl cysteine intermediate) is an active-site residue. Residues 580–600 (IFITFVYSLNMAIFVFLYLSL) form a helical membrane-spanning segment. At 601–642 (QYFDKVKDQYDSDDEGEGEGFVCSILGDDMCYGYKNHHFHFN) the chain is on the lumenal side. A helical membrane pass occupies residues 643–663 (VFMWDLFQCVWVSFLCIVQTF). At 664–813 (QILKGLTTWE…VDYYTLYSYH (150 aa)) the chain is on the cytoplasmic side.

Belongs to the DHHC palmitoyltransferase family. AKR/ZDHHC17 subfamily.

Its subcellular location is the early endosome membrane. The protein localises to the golgi apparatus membrane. It carries out the reaction L-cysteinyl-[protein] + hexadecanoyl-CoA = S-hexadecanoyl-L-cysteinyl-[protein] + CoA. Functionally, palmitoyltransferase specific for casein kinase 1. The protein is Palmitoyltransferase AKR1 (AKR1) of Candida albicans (strain SC5314 / ATCC MYA-2876) (Yeast).